Consider the following 254-residue polypeptide: HLA class II histocompatibility antigen, DR alpha chain (254 aa).

The signal sequence occupies residues 1 to 25 (MAISGVPVLGFFIIAVLMSAQESWA). The interval 26-109 (IKEEHVIIQA…KRSNYTPITN (84 aa)) is alpha-1. Over 26–216 (IKEEHVIIQA…APSPLPETTE (191 aa)) the chain is Extracellular. N103 and N143 each carry an N-linked (GlcNAc...) asparagine glycan. Residues 110–203 (VPPEVTVLTN…GLDEPLLKHW (94 aa)) form an alpha-2 region. The region spanning 112–204 (PEVTVLTNSP…LDEPLLKHWE (93 aa)) is the Ig-like C1-type domain. C132 and C188 are joined by a disulfide. The segment at 204–216 (EFDAPSPLPETTE) is connecting peptide. Residues 217-239 (NVVCALGLTVGLVGIIIGTIFII) traverse the membrane as a helical segment. Topologically, residues 240-254 (KGLRKSNAAERRGPL) are cytoplasmic. K244 is covalently cross-linked (Glycyl lysine isopeptide (Lys-Gly) (interchain with G-Cter in ubiquitin)).

This sequence belongs to the MHC class II family. In terms of assembly, heterotrimer that consists of an alpha chain HLA-DRA, a beta chain HLA-DRB and a peptide (peptide-MHCII). Newly synthesized alpha and beta chains forms a heterodimer (MHCII) that associates with the CD74/invariant chain (Ii) in the endoplasmic reticulum (ER). Ii is a trimer composed of three subunits and each subunit interacts with one MHCII dimer, blocking the peptide-binding cleft. As a result, MHCII molecules cannot bind peptides present in the ER. The complex of MHCII and CD74/Ii is transported in vesicles from ER to Golgi to lysosomes, where it encounters antigenic peptides generated via proteolysis of endocytosed antigens. MHCII dimers are dissociated from CD74/Ii by the combined action of proteolysis and HLA-DM. Lysosomal enzymes such as cathepsin, degrade CD74/Ii leaving a 24 amino acid remnant called class II-associated Ii or CLIP. Interacts (via the peptide binding cleft) with CLIP; this interaction inhibits antigen peptide binding before entry in the endosomal compartment. The displacement of CLIP and replacement by a high affinity peptide in lysosomes is performed by HLA-DM heterodimer. HLA-DM catalyzes CLIP dissociation from MHCII, stabilizes empty MHCII and mediates the selection of high affinity peptides. Interacts with HLA-DM heterodimer; this interaction is direct. Interacts (via alpha-1 domain) with TCR (via CDRs). Interacts (via alpha-2 domain) with CD4 (via Ig-like V-type domain); this interaction increases the affinity of TCR for peptide-MHCII. (Microbial infection) Interacts with Epstein-Barr virus BZLF2/gp42. As to quaternary structure, (Microbial infection) Interacts with Staphylococcus aureus enterotoxin A/entA, enterotoxin B/entB, enterotoxin C1/entC1, enterotoxin D/entD, and enterotoxin H/entH. Post-translationally, ubiquitinated by MARCHF1 or MARCHF8 at Lys-244 leading to down-regulation of MHCII. When associated with ubiquitination of the beta chain at 'Lys-254', the down-regulation of MHCII may be highly effective. Expressed in professional APCs: macrophages, dendritic cells and B cells (at protein level). Expressed in thymic epithelial cells (at protein level).

The protein localises to the cell membrane. Its subcellular location is the endoplasmic reticulum membrane. It localises to the early endosome membrane. It is found in the late endosome membrane. The protein resides in the lysosome membrane. The protein localises to the autolysosome membrane. In terms of biological role, an alpha chain of antigen-presenting major histocompatibility complex class II (MHCII) molecule. In complex with the beta chain HLA-DRB, displays antigenic peptides on professional antigen presenting cells (APCs) for recognition by alpha-beta T cell receptor (TCR) on HLA-DR-restricted CD4-positive T cells. This guides antigen-specific T-helper effector functions, both antibody-mediated immune response and macrophage activation, to ultimately eliminate the infectious agents and transformed cells. Typically presents extracellular peptide antigens of 10 to 30 amino acids that arise from proteolysis of endocytosed antigens in lysosomes. In the tumor microenvironment, presents antigenic peptides that are primarily generated in tumor-resident APCs likely via phagocytosis of apoptotic tumor cells or macropinocytosis of secreted tumor proteins. Presents peptides derived from intracellular proteins that are trapped in autolysosomes after macroautophagy, a mechanism especially relevant for T cell selection in the thymus and central immune tolerance. The selection of the immunodominant epitopes follows two processing modes: 'bind first, cut/trim later' for pathogen-derived antigenic peptides and 'cut first, bind later' for autoantigens/self-peptides. The anchor residue at position 1 of the peptide N-terminus, usually a large hydrophobic residue, is essential for high affinity interaction with MHCII molecules. The protein is HLA class II histocompatibility antigen, DR alpha chain (HLA-DRA) of Homo sapiens (Human).